The primary structure comprises 124 residues: Aspartate 1-decarboxylase (124 aa).

The active-site Schiff-base intermediate with substrate; via pyruvic acid is Ser25. Ser25 carries the pyruvic acid (Ser) modification. Substrate is bound at residue Thr57. Tyr58 functions as the Proton donor in the catalytic mechanism. 71–73 (GAA) contacts substrate.

It belongs to the PanD family. In terms of assembly, heterooctamer of four alpha and four beta subunits. Pyruvate is required as a cofactor. Post-translationally, is synthesized initially as an inactive proenzyme, which is activated by self-cleavage at a specific serine bond to produce a beta-subunit with a hydroxyl group at its C-terminus and an alpha-subunit with a pyruvoyl group at its N-terminus.

The protein resides in the cytoplasm. The catalysed reaction is L-aspartate + H(+) = beta-alanine + CO2. Its pathway is cofactor biosynthesis; (R)-pantothenate biosynthesis; beta-alanine from L-aspartate: step 1/1. Catalyzes the pyruvoyl-dependent decarboxylation of aspartate to produce beta-alanine. In Bdellovibrio bacteriovorus (strain ATCC 15356 / DSM 50701 / NCIMB 9529 / HD100), this protein is Aspartate 1-decarboxylase.